The chain runs to 733 residues: Phosphoribosylformylglycinamidine synthase subunit PurL (733 aa).

Residue His-41 is part of the active site. ATP contacts are provided by Tyr-44 and Lys-83. Mg(2+) is bound at residue Glu-85. Substrate-binding positions include 86-89 (SHNH) and Arg-108. Residue His-87 is the Proton acceptor of the active site. Asp-109 is a binding site for Mg(2+). A disordered region spans residues 212–232 (GASFASQELSEESEEKRPSVQ). Residue Gln-232 coordinates substrate. Asp-260 is a binding site for Mg(2+). Residue 304–306 (ESQ) participates in substrate binding. ATP-binding residues include Asp-488 and Gly-525. Asn-526 lines the Mg(2+) pocket. Ser-528 provides a ligand contact to substrate.

Belongs to the FGAMS family. As to quaternary structure, monomer. Part of the FGAM synthase complex composed of 1 PurL, 1 PurQ and 2 PurS subunits.

The protein localises to the cytoplasm. The enzyme catalyses N(2)-formyl-N(1)-(5-phospho-beta-D-ribosyl)glycinamide + L-glutamine + ATP + H2O = 2-formamido-N(1)-(5-O-phospho-beta-D-ribosyl)acetamidine + L-glutamate + ADP + phosphate + H(+). The protein operates within purine metabolism; IMP biosynthesis via de novo pathway; 5-amino-1-(5-phospho-D-ribosyl)imidazole from N(2)-formyl-N(1)-(5-phospho-D-ribosyl)glycinamide: step 1/2. Its function is as follows. Part of the phosphoribosylformylglycinamidine synthase complex involved in the purines biosynthetic pathway. Catalyzes the ATP-dependent conversion of formylglycinamide ribonucleotide (FGAR) and glutamine to yield formylglycinamidine ribonucleotide (FGAM) and glutamate. The FGAM synthase complex is composed of three subunits. PurQ produces an ammonia molecule by converting glutamine to glutamate. PurL transfers the ammonia molecule to FGAR to form FGAM in an ATP-dependent manner. PurS interacts with PurQ and PurL and is thought to assist in the transfer of the ammonia molecule from PurQ to PurL. In Caldanaerobacter subterraneus subsp. tengcongensis (strain DSM 15242 / JCM 11007 / NBRC 100824 / MB4) (Thermoanaerobacter tengcongensis), this protein is Phosphoribosylformylglycinamidine synthase subunit PurL.